Consider the following 464-residue polypeptide: Probable LL-diaminopimelate aminotransferase, chloroplastic (464 aa).

A chloroplast-targeting transit peptide spans 1–39 (MAASPAAGAAAATVSSFVSPSSFSSVKASKPDRLRPARR). Substrate is bound at residue G102. A pyridoxal 5'-phosphate-binding site is contributed by Y132. Substrate-binding residues include E135, K167, Y190, and N247. Pyridoxal 5'-phosphate is bound by residues N247, D275, Y278, S305, and S307. K308 is subject to N6-(pyridoxal phosphate)lysine. R316 serves as a coordination point for pyridoxal 5'-phosphate. 2 residues coordinate substrate: N347 and R442.

It belongs to the class-I pyridoxal-phosphate-dependent aminotransferase family. LL-diaminopimelate aminotransferase subfamily. In terms of assembly, homodimer. It depends on pyridoxal 5'-phosphate as a cofactor.

The protein localises to the plastid. Its subcellular location is the chloroplast. It catalyses the reaction (2S,6S)-2,6-diaminopimelate + 2-oxoglutarate = (S)-2,3,4,5-tetrahydrodipicolinate + L-glutamate + H2O + H(+). It functions in the pathway amino-acid biosynthesis; L-lysine biosynthesis via DAP pathway; LL-2,6-diaminopimelate from (S)-tetrahydrodipicolinate (aminotransferase route): step 1/1. Functionally, required for lysine biosynthesis. Catalyzes the direct conversion of tetrahydrodipicolinate to LL-diaminopimelate, a reaction that requires three enzymes in E.coli. This chain is Probable LL-diaminopimelate aminotransferase, chloroplastic (AGD2), found in Oryza sativa subsp. japonica (Rice).